We begin with the raw amino-acid sequence, 137 residues long: Putative pre-16S rRNA nuclease (137 aa).

The protein belongs to the YqgF nuclease family.

The protein localises to the cytoplasm. Could be a nuclease involved in processing of the 5'-end of pre-16S rRNA. The polypeptide is Putative pre-16S rRNA nuclease (Anaeromyxobacter sp. (strain Fw109-5)).